We begin with the raw amino-acid sequence, 1824 residues long: Afadin (1824 aa).

In terms of domain architecture, Ras-associating 1 spans 39 to 133; that stretch reads FHGVMRFYFQ…GRFVLKNEND (95 aa). The tract at residues 128–194 is disordered; it reads LKNENDAIPP…DRPFQGEDVE (67 aa). Positions 146 to 185 form a coiled coil; it reads EKQEKEGVIQNFKRTLSKKEKKEKKKREKEALRQASDKDD. Over residues 160–172 the composition is skewed to basic residues; the sequence is TLSKKEKKEKKKR. Over residues 173–189 the composition is skewed to basic and acidic residues; it reads EKEALRQASDKDDRPFQ. Phosphoserine is present on residues Ser216, Ser246, and Ser256. The 103-residue stretch at 246 to 348 folds into the Ras-associating 2 domain; the sequence is SGGTLRIYAD…LVFQLKRRPP (103 aa). Residues 349-371 show a composition bias toward basic and acidic residues; the sequence is DHIPKKTKKHLEGKTPKGKERAD. Residues 349 to 378 are disordered; that stretch reads DHIPKKTKKHLEGKTPKGKERADGSGYGST. Residues Ser391 and Ser424 each carry the phosphoserine modification. One can recognise an FHA domain in the interval 426 to 492; sequence TEVGTEKLDD…LQSGMKVQFG (67 aa). Phosphoserine occurs at positions 512, 557, 562, 589, and 655. Residues 534 to 595 form a disordered region; it reads FDLGGDIHSG…RQESRTQDAS (62 aa). Residues 580-591 are compositionally biased toward basic and acidic residues; that stretch reads QQPDYRRQESRT. A Dilute domain is found at 668–908; the sequence is NKMVSMMEGV…IENVVTVAEN (241 aa). A PDZ domain is found at 1007 to 1093; sequence IITVTLKKQN…VVTLEVAKQG (87 aa). Phosphoserine occurs at positions 1083, 1107, 1126, 1140, 1143, 1172, 1173, 1182, and 1199. Residues 1107–1223 form a disordered region; that stretch reads SPMMQRISDR…PRPEAYPIPT (117 aa). Over residues 1113–1128 the composition is skewed to basic and acidic residues; that stretch reads ISDRRGSGKPRPKSEG. Over residues 1132–1143 the composition is skewed to polar residues; the sequence is YNNSTQNGSPES. A compositionally biased stretch (basic and acidic residues) spans 1152 to 1172; it reads SEPKKLPGDDRLMKNRADHRS. Polar residues predominate over residues 1190-1210; the sequence is ASGTTAKITSVSTGNLCTEEQ. A phosphothreonine mark is found at Thr1211 and Thr1232. 3 disordered regions span residues 1235–1473, 1501–1528, and 1569–1824; these read ASKS…LQRP, SKEE…EKQQ, and RLQE…LNTK. Ser1238 carries the phosphoserine modification. Basic and acidic residues-rich tracts occupy residues 1252-1262 and 1274-1302; these read YEEKPHMHTDS and RSQE…KSDS. Ser1275 is modified (phosphoserine). Over residues 1309-1318 the composition is skewed to low complexity; it reads SSSLDSSTSS. Residues 1325-1337 are compositionally biased toward polar residues; sequence SSKSVTPASTLTK. Ser1328 carries the post-translational modification Phosphoserine. Thr1330 bears the Phosphothreonine mark. Residues 1345–1356 show a composition bias toward low complexity; the sequence is TPAAIPATPVAV. Over residues 1364–1373 the composition is skewed to pro residues; that stretch reads LPPPPPPPPV. A compositionally biased stretch (basic and acidic residues) spans 1407 to 1441; sequence AERRKREEHQRWYEKEKARLEEERERKRREQERKL. Residues 1408 to 1448 are a coiled coil; sequence ERRKREEHQRWYEKEKARLEEERERKRREQERKLGQMRTQS. A phosphoserine mark is found at Ser1501 and Ser1512. Basic and acidic residues predominate over residues 1515–1528; it reads PWKRDAKEKLEKQQ. Residues 1523 to 1667 adopt a coiled-coil conformation; it reads KLEKQQQMHI…SRLEAERRRQ (145 aa). A compositionally biased stretch (acidic residues) spans 1578–1589; the sequence is EDDEEEEDDDVD. Residues 1597–1677 are compositionally biased toward basic and acidic residues; sequence LEAERRARLQ…HDEAARRLLE (81 aa). The segment covering 1694 to 1709 has biased composition (pro residues); that stretch reads PPSPSPAPGAPPPPPQ. Residues Ser1696, Ser1721, Ser1774, Ser1779, and Ser1799 each carry the phosphoserine modification. Basic and acidic residues predominate over residues 1762–1776; it reads DACRDAKEKRSKSQD. N6-acetyllysine is present on Lys1807. The span at 1813–1824 shows a compositional bias: basic and acidic residues; that stretch reads KLTELENELNTK.

As to quaternary structure, homodimer. Interacts with F-actin, nectin and NECTIN3. Essential for the association of nectin and E-cadherin. Isoform 1/s-afadin does not interact with F-actin. Interacts with ZO-1 and occludin, but probably in an indirect manner. Interacts with RIT1 and RIT2. Interacts with NRXN1 and BCR. Interacts with ADAM10; the interaction locks ADAM10 at adherens junctions following ADAM10 recruitment to adherens junctions by TSPAN33.

Its subcellular location is the cell junction. It localises to the adherens junction. In terms of biological role, belongs to an adhesion system, probably together with the E-cadherin-catenin system, which plays a role in the organization of homotypic, interneuronal and heterotypic cell-cell adherens junctions (AJs). Nectin- and actin-filament-binding protein that connects nectin to the actin cytoskeleton. May play a key role in the organization of epithelial structures of the embryonic ectoderm. Essential for the organization of adherens junctions. The sequence is that of Afadin from Homo sapiens (Human).